We begin with the raw amino-acid sequence, 468 residues long: Argininosuccinate lyase (468 aa).

It belongs to the lyase 1 family. Argininosuccinate lyase subfamily.

It is found in the cytoplasm. It catalyses the reaction 2-(N(omega)-L-arginino)succinate = fumarate + L-arginine. It functions in the pathway amino-acid biosynthesis; L-arginine biosynthesis; L-arginine from L-ornithine and carbamoyl phosphate: step 3/3. The sequence is that of Argininosuccinate lyase from Hahella chejuensis (strain KCTC 2396).